Reading from the N-terminus, the 271-residue chain is tRNA pseudouridine synthase A (271 aa).

The active-site Nucleophile is Asp54. Tyr112 is a binding site for substrate.

Belongs to the tRNA pseudouridine synthase TruA family. In terms of assembly, homodimer.

It catalyses the reaction uridine(38/39/40) in tRNA = pseudouridine(38/39/40) in tRNA. In terms of biological role, formation of pseudouridine at positions 38, 39 and 40 in the anticodon stem and loop of transfer RNAs. This chain is tRNA pseudouridine synthase A, found in Acinetobacter baylyi (strain ATCC 33305 / BD413 / ADP1).